Consider the following 862-residue polypeptide: Protein translocase subunit SecA (862 aa).

ATP contacts are provided by residues Gln-88, 106–110, and Asp-506; that span reads GEGKT. Zn(2+) is bound by residues Cys-839, Cys-841, Cys-850, and His-851.

It belongs to the SecA family. In terms of assembly, monomer and homodimer. Part of the essential Sec protein translocation apparatus which comprises SecA, SecYEG and auxiliary proteins SecDF-YajC and YidC. Zn(2+) serves as cofactor.

Its subcellular location is the cell inner membrane. The protein localises to the cytoplasm. It catalyses the reaction ATP + H2O + cellular proteinSide 1 = ADP + phosphate + cellular proteinSide 2.. Its function is as follows. Part of the Sec protein translocase complex. Interacts with the SecYEG preprotein conducting channel. Has a central role in coupling the hydrolysis of ATP to the transfer of proteins into and across the cell membrane, serving as an ATP-driven molecular motor driving the stepwise translocation of polypeptide chains across the membrane. The protein is Protein translocase subunit SecA of Campylobacter jejuni subsp. jejuni serotype O:2 (strain ATCC 700819 / NCTC 11168).